We begin with the raw amino-acid sequence, 993 residues long: MAMNFGDHASGFRHDDVIRFINNEVLRNGGSPAFYTAFRSRPWNEVEDRLRAIVADPRVPRAIKRACTWSALALSVQVAARQQEELLYQVWWLQGHVEECQATSWALTSQLQQLRLEHEEVATQLHLTQAALQQVLNERDGLCGRLLEVERSMQVYPMPQDFVPGPEAGQYGPVAGTLNAEQSEAVATEAQGMPHSEAQVAAPTAVYYMPEPQSGRVQGMQPLLLMQAPHPVPFHMPSPMGLPYSTPLPPPVVMESAAAIAPQMPPAGIYPPGLWATVGSQEETAPPWDQKCHGQDGYPENFQGVYHPGDNRSCNQKEGSECPQGMTSQGDSSSHSLKKDPVMQEGTAPPEFSRSHSLEKKPVMPKEMVPLGDSNSHSLKKDPVVPKEIVPIGDSNSHSLTKNPVVHKEMVSLGDSNSHSMKKDPVMPQKMVPLGDSNSHSLKKDPMMCQEMVPLGDSNSHSLKKDPVVAQGTAPLMYSRRHSQKKVPMMPKEMVPLGESHSHSLKKDLVVPKELVPLGDSKSHRMKKDPVMPQKMVPLGDSRSHSLKKDPVMPQNMIPLEDSNSHSLKKDPVMPQNMIPLEDSNSHSLKKDPMMHQEMVPLGDSNSHSLKKDPVVPQDTAPLMFSRRHSLKKVPVMPKEMVPLGDSHSLKKDPVMPQNMVPLEDSNSHSLKKDPVVPQGTAPLMFSRRHSLKKVPVMPKEMVPLGDSNSHSLKKDPVVPQGTAPLMFSRRHSLKKVPVMPKEMVPLGDSHSLKKDPVMPQNMVPLEDSNSHSLKKDPVVPQGTAPLTFSRRHSLKKVPVVPQGTASLGFSRIHSLKKELVMPEEMVPLGDSNSHSMKKDLVMPKEMVPLGDSNSHSLKKDPVVHQEVVSLGDSNSHSLKKHPVIPQGTASLRFSKSHSQKEDQERPQVTPLEDSKSHGVKNSPWKHQPQGQKVKEQKRKKASESQQQKPASCSSPVNWACPWCNAMNFPRNKVCSKCKRVRMPVENGSVDPA.

Disordered stretches follow at residues 281-381 (QEET…SLKK), 520-547 (DSKSHRMKKDPVMPQKMVPLGDSRSHSL), and 894-959 (FSKS…PVNW). The span at 325–335 (GMTSQGDSSSH) shows a compositional bias: polar residues. The span at 353 to 364 (SRSHSLEKKPVM) shows a compositional bias: basic and acidic residues. Residues 944–957 (ESQQQKPASCSSPV) show a composition bias toward polar residues. The segment at 955-984 (SPVNWACPWCNAMNFPRNKVCSKCKRVRMP) adopts a RanBP2-type zinc-finger fold.

This sequence belongs to the TEX13 family.

The sequence is that of Testis-expressed protein 13C from Homo sapiens (Human).